We begin with the raw amino-acid sequence, 209 residues long: Chaperone protein TorD (209 aa).

This sequence belongs to the TorD/DmsD family. TorD subfamily.

Its subcellular location is the cytoplasm. Its function is as follows. Involved in the biogenesis of TorA. Acts on TorA before the insertion of the molybdenum cofactor and, as a result, probably favors a conformation of the apoenzyme that is competent for acquiring the cofactor. This is Chaperone protein TorD from Shewanella baltica (strain OS155 / ATCC BAA-1091).